The chain runs to 713 residues: Bifunctional protein gal10 (713 aa).

Positions 1-350 (MAVQDEYILV…TIENPFGFQI (350 aa)) are galactowaldenase. An NAD(+)-binding site is contributed by 7 to 38 (YILVTGGAGYIGSHTVIELINHGYKVIIVDNL). The mutarotase stretch occupies residues 351–713 (DNYKWKLFNT…SASYNSGEYY (363 aa)). The active-site For mutarotase activity is H532.

In the N-terminal section; belongs to the NAD(P)-dependent epimerase/dehydratase family. The protein in the C-terminal section; belongs to the aldose epimerase family. NAD(+) serves as cofactor.

The enzyme catalyses UDP-alpha-D-glucose = UDP-alpha-D-galactose. The catalysed reaction is alpha-D-glucose = beta-D-glucose. It participates in carbohydrate metabolism; galactose metabolism. The protein operates within carbohydrate metabolism; hexose metabolism. In terms of biological role, mutarotase converts alpha-aldose to the beta-anomer. It is active on D-glucose, L-arabinose, D-xylose, D-galactose, maltose and lactose. The sequence is that of Bifunctional protein gal10 (gal10) from Schizosaccharomyces pombe (strain 972 / ATCC 24843) (Fission yeast).